We begin with the raw amino-acid sequence, 154 residues long: Protein X (154 aa).

A mitochondrial targeting sequence region spans residues 68 to 117 (PCALRFTSARCMETTVNAHQILPKVLHKRTLGLPAMSTTDLEAYFKDCVF).

This sequence belongs to the orthohepadnavirus protein X family. As to quaternary structure, may form homodimer. May interact with host CEBPA, CFLAR, CREB1, DDB1, E4F1, HBXIP, HSPD1/HSP60, NFKBIA, POLR2E and SMAD4. Interacts with host SMC5-SMC6 complex and induces its degradation. Interacts with host TRPC4AP; leading to prevent ubiquitination of TRPC4AP. Interacts with host PLSCR1; this interaction promotes ubiquitination and degradation of HBx and impairs HBx-mediated cell proliferation. Post-translationally, a fraction may be phosphorylated in insect cells and HepG2 cells, a human hepatoblastoma cell line. Phosphorylated in vitro by host protein kinase C or mitogen-activated protein kinase. N-acetylated in insect cells.

It is found in the host cytoplasm. The protein resides in the host nucleus. The protein localises to the host mitochondrion. In terms of biological role, multifunctional protein that plays a role in silencing host antiviral defenses and promoting viral transcription. Does not seem to be essential for HBV infection. May be directly involved in development of cirrhosis and liver cancer (hepatocellular carcinoma). Most of cytosolic activities involve modulation of cytosolic calcium. The effect on apoptosis is controversial depending on the cell types in which the studies have been conducted. May induce apoptosis by localizing in mitochondria and causing loss of mitochondrial membrane potential. May also modulate apoptosis by binding host CFLAR, a key regulator of the death-inducing signaling complex (DISC). Promotes viral transcription by using the host E3 ubiquitin ligase DDB1 to target the SMC5-SMC6 complex to proteasomal degradation. This host complex would otherwise bind to viral episomal DNA, and prevents its transcription. Moderately stimulates transcription of many different viral and cellular transcription elements. Promoters and enhancers stimulated by HBx contain DNA binding sites for NF-kappa-B, AP-1, AP-2, c-EBP, ATF/CREB, or the calcium-activated factor NF-AT. This is Protein X from Homo sapiens (Human).